The following is a 193-amino-acid chain: Tetrahydromethanopterin S-methyltransferase subunit A 2 (193 aa).

Topologically, residues M1–D38 are cytoplasmic. A helical membrane pass occupies residues I39 to I58. The Extracellular segment spans residues E59–A193. H84 is a 5-hydroxybenzimidazolylcob(I)amide binding site. The tract at residues S174–A193 is disordered.

It belongs to the MtrA family. In terms of assembly, the complex is composed of 8 subunits; MtrA, MtrB, MtrC, MtrD, MtrE, MtrF, MtrG and MtrH. It depends on 5-hydroxybenzimidazolylcob(I)amide as a cofactor.

Its subcellular location is the cell membrane. The catalysed reaction is 5-methyl-5,6,7,8-tetrahydromethanopterin + coenzyme M + 2 Na(+)(in) = 5,6,7,8-tetrahydromethanopterin + methyl-coenzyme M + 2 Na(+)(out). The protein operates within one-carbon metabolism; methanogenesis from CO(2); methyl-coenzyme M from 5,10-methylene-5,6,7,8-tetrahydromethanopterin: step 2/2. In terms of biological role, part of a complex that catalyzes the formation of methyl-coenzyme M and tetrahydromethanopterin from coenzyme M and methyl-tetrahydromethanopterin. This is an energy-conserving, sodium-ion translocating step. This is Tetrahydromethanopterin S-methyltransferase subunit A 2 from Methanobrevibacter ruminantium (strain ATCC 35063 / DSM 1093 / JCM 13430 / OCM 146 / M1) (Methanobacterium ruminantium).